Reading from the N-terminus, the 304-residue chain is N-acetylmuramic acid 6-phosphate etherase (304 aa).

The SIS domain maps to 58–221 (IVDRMKQGGR…TTASMVKMGK (164 aa)). Residue Glu86 is the Proton donor of the active site. Glu117 is a catalytic residue.

The protein belongs to the GCKR-like family. MurNAc-6-P etherase subfamily. As to quaternary structure, homodimer.

It catalyses the reaction N-acetyl-D-muramate 6-phosphate + H2O = N-acetyl-D-glucosamine 6-phosphate + (R)-lactate. Its pathway is amino-sugar metabolism; N-acetylmuramate degradation. Functionally, specifically catalyzes the cleavage of the D-lactyl ether substituent of MurNAc 6-phosphate, producing GlcNAc 6-phosphate and D-lactate. The sequence is that of N-acetylmuramic acid 6-phosphate etherase from Clostridioides difficile (strain 630) (Peptoclostridium difficile).